The following is a 406-amino-acid chain: 8-amino-7-oxononanoate synthase (406 aa).

Residue arginine 20 participates in substrate binding. 116–117 (GY) contacts pyridoxal 5'-phosphate. Residue histidine 141 coordinates substrate. Pyridoxal 5'-phosphate-binding residues include serine 187, histidine 215, and threonine 243. N6-(pyridoxal phosphate)lysine is present on lysine 246. Threonine 366 is a substrate binding site.

It belongs to the class-II pyridoxal-phosphate-dependent aminotransferase family. BioF subfamily. As to quaternary structure, homodimer. It depends on pyridoxal 5'-phosphate as a cofactor.

It catalyses the reaction 6-carboxyhexanoyl-[ACP] + L-alanine + H(+) = (8S)-8-amino-7-oxononanoate + holo-[ACP] + CO2. It participates in cofactor biosynthesis; biotin biosynthesis. In terms of biological role, catalyzes the decarboxylative condensation of pimeloyl-[acyl-carrier protein] and L-alanine to produce 8-amino-7-oxononanoate (AON), [acyl-carrier protein], and carbon dioxide. This chain is 8-amino-7-oxononanoate synthase, found in Cupriavidus metallidurans (strain ATCC 43123 / DSM 2839 / NBRC 102507 / CH34) (Ralstonia metallidurans).